We begin with the raw amino-acid sequence, 150 residues long: Large ribosomal subunit protein uL15 (150 aa).

A disordered region spans residues 1–58 (MNLSGIKPPKGQVKTKKRIGRGMGSGHGKTATRGSKGQHAGTGFSQKRGFEGGQMPLH).

The protein belongs to the universal ribosomal protein uL15 family. Part of the 50S ribosomal subunit.

Its function is as follows. Binds to the 23S rRNA. This chain is Large ribosomal subunit protein uL15, found in Solibacter usitatus (strain Ellin6076).